A 376-amino-acid polypeptide reads, in one-letter code: N-acetyldiaminopimelate deacetylase (376 aa).

Asp69 is an active-site residue. The active-site Proton acceptor is the Glu128.

Belongs to the peptidase M20A family. N-acetyldiaminopimelate deacetylase subfamily.

It carries out the reaction N-acetyl-(2S,6S)-2,6-diaminopimelate + H2O = (2S,6S)-2,6-diaminopimelate + acetate. Its pathway is amino-acid biosynthesis; L-lysine biosynthesis via DAP pathway; LL-2,6-diaminopimelate from (S)-tetrahydrodipicolinate (acetylase route): step 3/3. Functionally, catalyzes the conversion of N-acetyl-diaminopimelate to diaminopimelate and acetate. The chain is N-acetyldiaminopimelate deacetylase from Bacillus cereus (strain G9842).